We begin with the raw amino-acid sequence, 597 residues long: MFS-type transporter FPY5 (597 aa).

The tract at residues 1–55 (MSETTGLPLKHLQGSPPGTPVNTNNESNEASPDDGCRLPDTVTEAEASSDNHGSV) is disordered. Composition is skewed to polar residues over residues 20-30 (PVNTNNESNEA) and 46-55 (EASSDNHGSV). Residue N25 is glycosylated (N-linked (GlcNAc...) asparagine). An N-linked (GlcNAc...) asparagine glycan is attached at N72. The next 9 membrane-spanning stretches (helical) occupy residues 94–114 (LSLLLSTLETTIVSTALVSIV), 120–140 (FNMAGWIVTSYLVTYTGFLII), 147–167 (IFGCKLMLLLAITIFTVFSMA), 183–203 (FQGMGGSGIYSLSTIMVPLMV), 214–234 (IMSSTFILSSVLGPILGGAIT), 241–261 (WVFYFNGPGGALAAVLLAFSV), 286–306 (VDFVGMTVSLAASILIIFALE), 316–336 (SGAIVSTFVLSGVLWIAFIAW), and 360–380 (FVMGLLLNGFFTGFPFMAALI). N390 carries an N-linked (GlcNAc...) asparagine glycan. Transmembrane regions (helical) follow at residues 402–422 (LPLLLLSPLATAINGILVSKL), 424–444 (VPPLYTLFLGGSLQTIGVGLY), 463–483 (IMGLGFGFNLSTILMMVPLVV), 498–518 (IRVLGGTIGLAVCSALLINHI), and 562–582 (EQMRVMLYFSIASILSLVLLV).

The protein belongs to the major facilitator superfamily. TCR/Tet family.

It localises to the membrane. It participates in secondary metabolite biosynthesis. Its function is as follows. MFS-type transporter; part of the gene cluster that mediates the biosynthesis of the gamma-pyrones fusapyrone (FPY) and deoxyfusapyrone (dFPY). The polypeptide is MFS-type transporter FPY5 (Fusarium mangiferae (Mango malformation disease fungus)).